A 78-amino-acid polypeptide reads, in one-letter code: DNA gyrase inhibitor YacG (78 aa).

Residues C7, C10, C26, and C30 each contribute to the Zn(2+) site.

Belongs to the DNA gyrase inhibitor YacG family. As to quaternary structure, interacts with GyrB. Zn(2+) serves as cofactor.

In terms of biological role, inhibits all the catalytic activities of DNA gyrase by preventing its interaction with DNA. Acts by binding directly to the C-terminal domain of GyrB, which probably disrupts DNA binding by the gyrase. This chain is DNA gyrase inhibitor YacG, found in Shewanella piezotolerans (strain WP3 / JCM 13877).